The following is an 896-amino-acid chain: MLSTLIKKMFGSRNERTLRRMEKSVMAINAFEPKMQALSNEELAGKTQEFKERFNNGESLDELLAEAFATVREVSLRTLGLRHFDVQLIGGMVLHEGNIAEMRTGEGKTLVATLPAYLNAISGRGVHIVTVNDYLAKRDSQWMKPIYEFLGLTVGVIYPDMSHKEKQEAYKADIVYGTNNEYGFDYLRDNMAFSLTDKVQRELNFAIVDEVDSILIDEARTPLIISGAAEDSSELYIKINSLIPQLKKQEEEGDEGDYTIDEKQKQAHLTDAGHLHIEELLTKAKLLDPGESLYHASNIMLMHHVNAALKAHAMFHRDIDYIVKDNQVVIVDEHTGRTMPGRRWSEGLHQAVEAKEGVSIQNENQTLASITFQNFFRMYNKLSGMTGTADTEAYEFQQIYNLEVVVIPTNRSMIRKDEADLVYLTQADKFQAIIEDVRECGVRRQPVLVGTVSIEASEFLSQLLKKENIKHQVLNAKFHEKEAQIIAEAGRPGAVTIATNMAGRGTDIVLGGSLAADLANLPADASEQEKEVVKKEWQKRHDEVIAAGGLRIIGSERHESRRIDNQLRGRAGRQGDPGSSRFYLSLEDNLMRIFASERVGSMMRRLGMQPGEPIEHSLVTRAIENAQRKLEGHHFDVRKQLLDYDNVANDQRQVIYTQRSSIMAMTDTQEVVEMMREEVMDSLVDTYIPPQSLEDQWDPQALSDVLSDEFKIKAPVPDWIDKDHSIQPEQIKEKILALAIEHYDEKVRKVGRPVISQFEKSIILQTLDNHWREHLAAMDQLRQGIHLRGYAQKDPKQEYKKEAFSLFTMMLDNLKYEVIRILSSVEIQTEEDAHVVEEQRRAEQIKKMNLMHENLSENDEASETQTFRRQEKKIGRNDPCPCGSGKKYKACHGSLV.

ATP-binding positions include Q87, 105–109 (GEGKT), and D507. The segment at 855–879 (LSENDEASETQTFRRQEKKIGRNDP) is disordered. The span at 866 to 876 (TFRRQEKKIGR) shows a compositional bias: basic and acidic residues. C880, C882, C891, and H892 together coordinate Zn(2+).

This sequence belongs to the SecA family. As to quaternary structure, monomer and homodimer. Part of the essential Sec protein translocation apparatus which comprises SecA, SecYEG and auxiliary proteins SecDF-YajC and YidC. Requires Zn(2+) as cofactor.

Its subcellular location is the cell inner membrane. It is found in the cytoplasm. The catalysed reaction is ATP + H2O + cellular proteinSide 1 = ADP + phosphate + cellular proteinSide 2.. Its function is as follows. Part of the Sec protein translocase complex. Interacts with the SecYEG preprotein conducting channel. Has a central role in coupling the hydrolysis of ATP to the transfer of proteins into and across the cell membrane, serving both as a receptor for the preprotein-SecB complex and as an ATP-driven molecular motor driving the stepwise translocation of polypeptide chains across the membrane. This Legionella pneumophila (strain Lens) protein is Protein translocase subunit SecA.